Reading from the N-terminus, the 205-residue chain is Small ribosomal subunit protein uS4 (205 aa).

Positions 1–16 are enriched in basic and acidic residues; the sequence is MSKRETTKYKIDRRMG. The disordered stretch occupies residues 1–46; it reads MSKRETTKYKIDRRMGENIWGRPKSPVNRRDYGPGQHGQRRKGKLS. The region spanning 94–157 is the S4 RNA-binding domain; it reads SRLDAVIYRA…KQLVLVLESV (64 aa).

The protein belongs to the universal ribosomal protein uS4 family. Part of the 30S ribosomal subunit. Contacts protein S5. The interaction surface between S4 and S5 is involved in control of translational fidelity.

In terms of biological role, one of the primary rRNA binding proteins, it binds directly to 16S rRNA where it nucleates assembly of the body of the 30S subunit. Its function is as follows. With S5 and S12 plays an important role in translational accuracy. This Bartonella quintana (strain Toulouse) (Rochalimaea quintana) protein is Small ribosomal subunit protein uS4.